The primary structure comprises 405 residues: Phosphopentomutase (405 aa).

Mn(2+) is bound by residues Asp10, Asp303, His308, Asp344, His345, and His356.

The protein belongs to the phosphopentomutase family. Mn(2+) serves as cofactor.

It is found in the cytoplasm. It catalyses the reaction 2-deoxy-alpha-D-ribose 1-phosphate = 2-deoxy-D-ribose 5-phosphate. The catalysed reaction is alpha-D-ribose 1-phosphate = D-ribose 5-phosphate. Its pathway is carbohydrate degradation; 2-deoxy-D-ribose 1-phosphate degradation; D-glyceraldehyde 3-phosphate and acetaldehyde from 2-deoxy-alpha-D-ribose 1-phosphate: step 1/2. Its function is as follows. Isomerase that catalyzes the conversion of deoxy-ribose 1-phosphate (dRib-1-P) and ribose 1-phosphate (Rib-1-P) to deoxy-ribose 5-phosphate (dRib-5-P) and ribose 5-phosphate (Rib-5-P), respectively. The chain is Phosphopentomutase from Shewanella woodyi (strain ATCC 51908 / MS32).